Consider the following 5537-residue polypeptide: Histone-lysine N-methyltransferase 2D (5537 aa).

The segment at 1 to 60 is disordered; sequence MDSQKLAGEDKDSEPAADGPAASEDPSATESDLPNPHVGEVSVLSSGSPRLQETPQDCSG. Ser27 carries the post-translational modification Phosphoserine. The span at 43-57 shows a compositional bias: polar residues; the sequence is VLSSGSPRLQETPQD. The segment at 104 to 149 adopts a C2HC pre-PHD-type 1; degenerate zinc-finger fold; it reads GPNEAVLPSEDLSQIGFPEGLTPAHLGEPGGSCWAHHWCAAWSAGV. PHD-type zinc fingers lie at residues 170-218, 226-276, and 273-323; these read QRCS…PEHS, EARC…CKVC, and CKVC…CRVC. An RING-type 1; atypical zinc finger spans residues 229–274; that stretch reads CAVCEGPGELCDLFFCTSCGHHYHGACLDTALTARKRAGWQCPECK. Residues 276-321 form an RING-type 2; degenerate zinc finger; that stretch reads CQACRKPGNDSKMLVCETCDKGYHTFCLKPPMEELPAHSWKCKACR. 4 disordered regions span residues 368–387, 393–416, 436–1331, and 1340–1359; these read VCSR…EPDA, QGQP…QCEA, EEMP…RLKS, and VVAD…DDDT. Residues 439–668 form a 15 X 5 AA repeats of S/P-P-P-E/P-E/A region; it reads PLLPPPEESP…VSRLSPPPEE (230 aa). The span at 440–473 shows a compositional bias: pro residues; that stretch reads LLPPPEESPLSPPPEESPTSPPPEASRLSPPPEE. 3 tandem repeats follow at residues 442–446, 460–464, and 469–473. The span at 474-483 shows a compositional bias: low complexity; the sequence is LPASPLPEAL. Pro residues predominate over residues 494-509; that stretch reads LSPPPEESPLSPPPES. Tandem repeats lie at residues 496–500 and 504–508. Over residues 510–519 the composition is skewed to low complexity; that stretch reads SPFSPLEESP. Pro residues-rich tracts occupy residues 520–547 and 554–595; these read LSPP…PLSP and LSPP…PPPE. A run of 5 repeats spans residues 521–525, 555–559, 564–568, 573–577, and 582–586. Residues 596 to 607 show a composition bias toward low complexity; sequence ASRLFPPFEESP. A compositionally biased stretch (pro residues) spans 608 to 649; it reads LSPPPEESPLSPPPEASRLSPPPEDSPMSPPPEESPMSPPPE. A run of 4 repeats spans residues 609–613, 618–622, 627–631, and 645–649. Low complexity predominate over residues 650–662; sequence VSRLSPLPVVSRL. Copy 15 of the repeat occupies 663-667; the sequence is SPPPE. Residues 663-712 are compositionally biased toward pro residues; sequence SPPPEESPLSPPPEESPTSPPPEASRLSPPPEDSPTSPPPEDSPASPPPE. The span at 713–725 shows a compositional bias: low complexity; it reads DSLMSLPLEESPL. Position 744 is a phosphoserine (Ser744). Composition is skewed to basic and acidic residues over residues 745-760 and 845-869; these read PRPE…EEPH and RPEE…KPPE. Composition is skewed to low complexity over residues 889–903 and 911–928; these read PSLS…LSEP and LPEE…LSPQ. Residues 929 to 940 show a composition bias toward pro residues; that stretch reads LMPPDPLPPPLS. Positions 941-954 are enriched in low complexity; it reads PIITAAAPPALSPL. Residues 994–1008 are compositionally biased toward pro residues; that stretch reads EPVPPMILPPSPGSP. Residues 1048–1057 show a composition bias toward low complexity; it reads PLSVPSPLSP. Residues 1068–1080 show a composition bias toward basic and acidic residues; that stretch reads AELHEMETEKVSE. The residue at position 1151 (Ser1151) is a Phosphoserine. Thr1195 is subject to Phosphothreonine. Positions 1207 to 1216 are enriched in polar residues; that stretch reads EISNLSQGDA. Position 1249 is a phosphoserine (Ser1249). The residue at position 1267 (Thr1267) is a Phosphothreonine. Position 1270 is a phosphoserine (Ser1270). Basic residues-rich tracts occupy residues 1289–1302 and 1310–1329; these read GRRR…RIKQ and GRRR…RARL. 3 consecutive PHD-type zinc fingers follow at residues 1377–1430, 1427–1477, and 1504–1559; these read QDMC…CIVC, CIVC…CVSC, and LVTC…CQPY. The RING-type 3; atypical zinc finger occupies 1507 to 1557; that stretch reads CPICHAPYVEEDLLIQCRHCERWMHAGCESLFTEDDVEQAADEGFDCVSCQ. The residue at position 1606 (Ser1606) is a Phosphoserine. 4 disordered regions span residues 1610–1767, 1793–1889, 1904–2002, and 2165–2683; these read KRRQ…LEDM, GVGR…MESK, EQHL…NQRS, and PQVP…QRQR. Residues 1637 to 1666 are compositionally biased toward basic and acidic residues; it reads PDDKKDGDLDTDELLKGEGGVEHMECEIKL. Ser1671 carries the phosphoserine modification. The span at 1675 to 1685 shows a compositional bias: basic and acidic residues; that stretch reads EPGKEETEESK. 2 stretches are compositionally biased toward basic residues: residues 1702–1712 and 1753–1762; these read RQRKSHTRTKK and KQQRRGRKKS. 2 stretches are compositionally biased toward basic and acidic residues: residues 1806 to 1825 and 1832 to 1841; these read AKGD…KGDD and EESRGLEGKA. Residues Ser1820 and Ser1834 each carry the phosphoserine modification. A phosphothreonine mark is found at Thr1843 and Thr1865. A compositionally biased stretch (basic and acidic residues) spans 1874 to 1889; it reads DLDRISTEELPKMESK. The segment covering 1979-1990 has biased composition (low complexity); that stretch reads TTPSTPTTPTTE. A compositionally biased stretch (pro residues) spans 2190–2209; sequence PTAPPTYPPYPSPTGAPAQP. Ser2239 is modified (phosphoserine). At Thr2240 the chain carries Phosphothreonine. Lys2246 is subject to N6-acetyllysine. A phosphoserine mark is found at Ser2260 and Ser2274. The segment covering 2280 to 2292 has biased composition (basic and acidic residues); the sequence is ESRKALEVKKEEL. Phosphoserine is present on residues Ser2309, Ser2311, and Ser2342. 2 stretches are compositionally biased toward pro residues: residues 2350 to 2365 and 2379 to 2393; these read QEPP…PPSH and AQPP…PPPE. Low complexity-rich tracts occupy residues 2409 to 2431 and 2494 to 2505; these read SRVP…RPLS and FPAALPAGPAGE. Arg2535 is modified (asymmetric dimethylarginine). A compositionally biased stretch (pro residues) spans 2547–2560; that stretch reads LKPPVPQPGLPPPH. The segment covering 2574 to 2584 has biased composition (polar residues); sequence KPQSTNYTVAT. Positions 2589-2609 are enriched in low complexity; it reads PSGSPLGPSSGSTGESYGLSP. The span at 2610–2621 shows a compositional bias: pro residues; sequence LRPPSVLPPPAP. Ser2640 is modified (phosphoserine). A coiled-coil region spans residues 2669–2707; sequence MSGLSQTELEKQRQRQRLRELLIRQQIQRNTLRQEKETA. An LXXLL motif 1 motif is present at residues 2686 to 2690; sequence LRELL. Disordered regions lie at residues 2697 to 2814 and 2835 to 2996; these read RNTL…QQQQ and ARFP…LDDD. Residues 2707-2722 are compositionally biased toward low complexity; sequence AAAAAGAVGPPGSWGA. Polar residues-rich tracts occupy residues 2733 to 2746 and 2781 to 2790; these read SRGQ…QDKS and PSSMDVNSRQ. At Arg2836 the chain carries Asymmetric dimethylarginine. Residues 2931 to 2940 are compositionally biased toward pro residues; the sequence is PQKPSAPPAP. An LXXLL motif 2 motif is present at residues 3038-3042; it reads LDDLL. The segment at 3078–3110 is disordered; that stretch reads EKAEREALLRGVEPGPLGPEERPPPAADASEPR. The residue at position 3079 (Lys3079) is an N6-acetyllysine. Position 3130 is a phosphoserine (Ser3130). 2 disordered regions span residues 3147–3209 and 3263–3339; these read ANSL…GSSL and KQQL…AHAL. Thr3197 carries the phosphothreonine modification. Composition is skewed to low complexity over residues 3198-3209, 3263-3289, and 3301-3320; these read PSPLSGPGGSSL, KQQL…LSAP, and GSSP…LAGA. Residue Ser3199 is modified to Phosphoserine. Residues 3249–3282 are a coiled coil; the sequence is IEDLLEHEKKELQKKQQLSAQLQPAQQQQQQQQQ. Residues 3325–3334 are compositionally biased toward pro residues; that stretch reads LPQPLMPTQP. Residue Lys3433 is modified to N6-acetyllysine. Disordered regions lie at residues 3462–3499 and 3596–3673; these read LSGG…TFAQ and RNKQ…GPFL. Positions 3562–3614 form a coiled coil; the sequence is EKLKLVTEQQSKIQKQLDQVRKQQKEHTNLMAEYRNKQQQQQQQQQQQQQQHS. 2 stretches are compositionally biased toward low complexity: residues 3599 to 3612 and 3631 to 3643; these read QQQQ…QQQQ and LPGQ…GLQP. The stretch at 3714–3750 forms a coiled coil; sequence RLLQERQLQLQQQRMQLAQKLQQQQQQQQQQQHLLGQ. Position 3727 is an asymmetric dimethylarginine (Arg3727). The disordered stretch occupies residues 3758 to 3802; the sequence is QQGPGVQTNQALGPKPQGLMPPSSHQGLLVQQLSPQPPQGPQGML. Residues 3897–3975 adopt a coiled-coil conformation; it reads LQQLQQQQQL…FQQQQQQQQM (79 aa). The tract at residues 3984–4191 is disordered; it reads LLSPQQQQQQ…GQGLPGVGIM (208 aa). Low complexity predominate over residues 4012-4023; that stretch reads PGALGPTLLLTG. The segment covering 4024–4045 has biased composition (polar residues); the sequence is KEQNTVDPAVSSEATEGPSTHQ. Over residues 4073–4108 the composition is skewed to low complexity; that stretch reads SQLLLVQPQPQPQPSSLQLQPPLRLPGQQQQQVSLL. A compositionally biased stretch (gly residues) spans 4111 to 4120; that stretch reads AGGGSHGQLG. Over residues 4137-4154 the composition is skewed to polar residues; the sequence is PSVSLGDQPGSMTQNLLG. Position 4198 is an asymmetric dimethylarginine (Arg4198). A Phosphoserine modification is found at Ser4215. The short motif at 4222 to 4226 is the LXXLL motif 3 element; that stretch reads LQALL. Disordered stretches follow at residues 4233–4398 and 4410–4452; these read QSQA…VPGH and ASQL…LLLA. The segment covering 4237–4251 has biased composition (polar residues); that stretch reads VRQTPPYQEPGTQTS. Residues 4252-4282 show a composition bias toward low complexity; it reads PLQGLLGCQPQLGGFPGPQTGPLQELGAGPR. The short motif at 4253-4257 is the LXXLL motif 4 element; the sequence is LQGLL. Over residues 4283–4293 the composition is skewed to pro residues; the sequence is PQGPPRLPAPP. 2 stretches are compositionally biased toward low complexity: residues 4294 to 4305 and 4320 to 4331; these read GALSTGPVLGPV and PSQLPSPSSQLP. Over residues 4338-4357 the composition is skewed to pro residues; sequence PTHPGTPKPQGPTLEPPPGR. Ser4359 bears the Phosphoserine mark. The LXXLL motif 5 signature appears at 4463-4467; that stretch reads LQKLL. N6-acetyllysine is present on Lys4465. Disordered stretches follow at residues 4503–4544 and 4613–4727; these read QGTP…KEDG and KNNL…HLGS. Residues 4619 to 4633 show a composition bias toward pro residues; that stretch reads PPTPPSSLPPTPPPS. The segment covering 4648–4673 has biased composition (basic and acidic residues); sequence LGEHPKDAASARDSERALRDTSEVKS. Ser4738 is modified (phosphoserine). A Glycyl lysine isopeptide (Lys-Gly) (interchain with G-Cter in SUMO2) cross-link involves residue Lys4756. N6-acetyllysine is present on Lys4776. A phosphoserine mark is found at Ser4822 and Ser4849. The interval 4822 to 4857 is disordered; the sequence is SPARAGTEPKKGEAEGPGGKEKGLEGKSPDTGPDWL. The segment covering 4828–4849 has biased composition (basic and acidic residues); that stretch reads TEPKKGEAEGPGGKEKGLEGKS. Lys4880 is covalently cross-linked (Glycyl lysine isopeptide (Lys-Gly) (interchain with G-Cter in SUMO2)). The segment at 4905–4980 is disordered; the sequence is QLSAPPPEEP…GEDSRPPRLK (76 aa). The segment covering 4908-4931 has biased composition (pro residues); the sequence is APPPEEPSPPPSPLAPSPASPPTE. Residues 4932-4941 show a composition bias toward low complexity; the sequence is PLVELPTEPL. Positions 4966–4976 are enriched in basic and acidic residues; sequence RPPEEGEDSRP. The LXXLL motif 6 motif lies at 4990–4994; it reads LRLLL. The segment at 5029-5069 adopts a C2HC pre-PHD-type 2 zinc-finger fold; that stretch reads MRRCCFCHEEGDGATDGPARLLNLDLDLWVHLNCALWSTEV. The PHD-type 7 zinc finger occupies 5090 to 5137; sequence TKCSLCQRTGATSSCNRMRCPNVYHFACAIRAKCMFFKDKTMLCPMHK. Positions 5175–5235 constitute an FYR N-terminal domain; sequence LHMFRVGGLV…CCYRCSIGEN (61 aa). One can recognise an FYR C-terminal domain in the interval 5236 to 5321; the sequence is NGRPEFVIKV…ESCQNYLFRY (86 aa). The WDR5 interaction motif (WIN) motif lies at 5337–5342; sequence GCARSE. An SET domain is found at 5397-5513; it reads NNVYLARSRI…KGEELTYDYQ (117 aa). S-adenosyl-L-methionine contacts are provided by residues Tyr5451 and 5474-5475; that span reads NH. The Zn(2+) site is built by Cys5477, Cys5525, Cys5527, and Cys5532. A Post-SET domain is found at 5521–5537; the sequence is HKIPCHCGAWNCRKWMN.

Belongs to the class V-like SAM-binding methyltransferase superfamily. Histone-lysine methyltransferase family. TRX/MLL subfamily. In terms of assembly, component of the MLL2 complex (also named ASCOM complex), at least composed of catalytic subunit KMT2D/MLL2, ASH2L, RBBP5, WDR5, NCOA6, DPY30, KDM6A, PAXIP1/PTIP, PAGR1 and alpha- and beta-tubulin. Forms a core complex with the evolutionary conserved subcomplex WRAD composed of WDR5, RBBP5, ASH2L/ASH2 and DPY30 subunits; WRAD differentially stimulates the methyltransferase activity. Interacts with ESR1; interaction is direct. Interacts (via WIN motif) with WDR5. As to expression, expressed in most adult tissues, including a variety of hematoipoietic cells, with the exception of the liver.

Its subcellular location is the nucleus. The enzyme catalyses L-lysyl(4)-[histone H3] + S-adenosyl-L-methionine = N(6)-methyl-L-lysyl(4)-[histone H3] + S-adenosyl-L-homocysteine + H(+). Its function is as follows. Histone methyltransferase that catalyzes methyl group transfer from S-adenosyl-L-methionine to the epsilon-amino group of 'Lys-4' of histone H3 (H3K4). Part of chromatin remodeling machinery predominantly forms H3K4me1 methylation marks at active chromatin sites where transcription and DNA repair take place. Acts as a coactivator for estrogen receptor by being recruited by ESR1, thereby activating transcription. The protein is Histone-lysine N-methyltransferase 2D (KMT2D) of Homo sapiens (Human).